The chain runs to 767 residues: Protein ROLLING AND ERECT LEAF 2 (767 aa).

3 disordered regions span residues 1–20, 78–187, and 201–309; these read MGCT…CKER, PALA…SEFF, and RELE…SSTV. 2 stretches are compositionally biased toward pro residues: residues 81–90 and 110–126; these read APTPTPPPPS and APPP…PPPV. Positions 145–155 are enriched in low complexity; that stretch reads SDSSVASPARS. Residues 201-210 show a composition bias toward basic and acidic residues; sequence RELEEEEKAR. Over residues 221–232 the composition is skewed to acidic residues; it reads EDEVDDDDDERE. Positions 255-264 are enriched in basic and acidic residues; it reads TRSEEGEMGN.

In terms of tissue distribution, highly expressed in young leaves and panicles. Expressed at low levels in roots.

The protein localises to the cell membrane. Functionally, involved in the regulation of leaf shape formation. May function by coordinating the expression of genes associated with leaf and bulliform cell development. This is Protein ROLLING AND ERECT LEAF 2 from Oryza sativa subsp. japonica (Rice).